We begin with the raw amino-acid sequence, 501 residues long: Beta-secretase 1 (501 aa).

The signal sequence occupies residues 1–21; the sequence is MAQALPWLLLWMGAGVLPAHG. Residues 22 to 45 constitute a propeptide that is removed on maturation; it reads TQHGIRLPLRSGLGGAPLGLRLPR. Over 22–457 the chain is Extracellular; the sequence is TQHGIRLPLR…PQTDESTLMT (436 aa). The tract at residues 39–58 is disordered; that stretch reads LGLRLPRETDEEPEEPGRRG. In terms of domain architecture, Peptidase A1 spans 75 to 416; sequence YYVEMTVGSP…DRARKRIGFA (342 aa). Residue aspartate 93 is part of the active site. Lysine 126 bears the N6-acetyllysine mark. N-linked (GlcNAc...) asparagine glycans are attached at residues asparagine 153, asparagine 172, and asparagine 223. 3 disulfide bridges follow: cysteine 216/cysteine 420, cysteine 278/cysteine 443, and cysteine 330/cysteine 380. N6-acetyllysine occurs at positions 275, 279, and 285. Aspartate 289 is a catalytic residue. N6-acetyllysine occurs at positions 299, 300, and 307. The N-linked (GlcNAc...) asparagine glycan is linked to asparagine 354. The chain crosses the membrane as a helical span at residues 458–478; the sequence is IAYVMAAICALFMLPLCLMVC. Residues cysteine 474, cysteine 478, cysteine 482, and cysteine 485 are each lipidated (S-palmitoyl cysteine). Residues 479-501 are Cytoplasmic-facing; the sequence is QWRCLRCLRQQHDDFADDISLLK. The tract at residues 479 to 501 is interaction with RTN3; the sequence is QWRCLRCLRQQHDDFADDISLLK. The DXXLL motif lies at 496 to 500; the sequence is DISLL. Position 498 is a phosphoserine (serine 498). Lysine 501 is covalently cross-linked (Glycyl lysine isopeptide (Lys-Gly) (interchain with G-Cter in ubiquitin)).

The protein belongs to the peptidase A1 family. As to quaternary structure, monomer. Interacts (via DXXLL motif) with GGA1, GGA2 and GGA3 (via their VHS domain); the interaction highly increases when BACE1 is phosphorylated at Ser-498. Interacts with RTN1; RTN2; RTN3 and RTN4; the interaction leads to inhibition of amyloid precursor protein processing. Interacts with SNX6. Interacts with PCSK9. Interacts with NAT8 and NAT8B. Interacts with BIN1. Interacts (via extracellular domain) with ADAM10 (via extracellular domain). Interacts with SORL1; this interaction may affect binding with APP and hence reduce APP cleavage. Interacts with NRDC AND NRG1. N-Glycosylated. Addition of a bisecting N-acetylglucosamine by MGAT3 blocks lysosomal targeting, further degradation and is required for maintaining stability under stress conditions. In terms of processing, acetylated in the endoplasmic reticulum at Lys-126, Lys-275, Lys-279, Lys-285, Lys-299, Lys-300 and Lys-307. Acetylation by NAT8 and NAT8B is transient and deacetylation probably occurs in the Golgi. Acetylation regulates the maturation, the transport to the plasma membrane, the stability and the expression of the protein. Post-translationally, palmitoylation mediates lipid raft localization. Ubiquitinated at Lys-501, ubiquitination leads to lysosomal degradation. Monoubiquitinated and 'Lys-63'-linked polyubitinated. Deubiquitnated by USP8; inhibits lysosomal degradation. In terms of processing, phosphorylation at Ser-498 is required for interaction with GGA1 and retrograded transport from endosomal compartments to the trans-Golgi network. Non-phosphorylated BACE1 enters a direct recycling route to the cell surface. As to expression, expressed at high levels in the brain and pancreas. In the brain, expression is highest in the substantia nigra, locus coruleus and medulla oblongata.

It is found in the cell membrane. It localises to the golgi apparatus. Its subcellular location is the trans-Golgi network. The protein localises to the endoplasmic reticulum. The protein resides in the endosome. It is found in the cell surface. It localises to the cytoplasmic vesicle membrane. Its subcellular location is the membrane raft. The protein localises to the lysosome. The protein resides in the late endosome. It is found in the early endosome. It localises to the recycling endosome. Its subcellular location is the cell projection. The protein localises to the axon. The protein resides in the dendrite. The catalysed reaction is Broad endopeptidase specificity. Cleaves Glu-Val-Asn-Leu-|-Asp-Ala-Glu-Phe in the Swedish variant of Alzheimer's amyloid precursor protein.. With respect to regulation, inhibited by RTN3 and RTN4. In terms of biological role, responsible for the proteolytic processing of the amyloid precursor protein (APP). Cleaves at the N-terminus of the A-beta peptide sequence, between residues 671 and 672 of APP, leads to the generation and extracellular release of beta-cleaved soluble APP, and a corresponding cell-associated C-terminal fragment which is later released by gamma-secretase. Cleaves CHL1. The chain is Beta-secretase 1 from Homo sapiens (Human).